A 1804-amino-acid chain; its full sequence is Obscurin-like protein 1 (1804 aa).

The residue at position 10 (Ser10) is a Phosphoserine. 4 consecutive Ig-like domains span residues 12–100 (PCFL…AAVT), 128–225 (PKFL…ALLQ), 241–330 (PKPV…QTLS), and 339–425 (PRLR…ANVT). Residues 17 to 19 (FPR) form an interaction with TTN region. A disulfide bridge connects residues Cys33 and Cys84. Residues 85–94 (RARNAAGEAY) are interaction with TTN. Residues Cys149 and Cys209 are joined by a disulfide bond. The tract at residues 227–249 (HQPRESPPQDPDENPKPVLEPLK) is disordered. 2 disulfides stabilise this stretch: Cys267–Cys319 and Cys362–Cys412. The 99-residue stretch at 517-615 (PPGPPVMVEM…FNGSAHLVPT (99 aa)) folds into the Fibronectin type-III domain. Ig-like domains lie at 720-800 (PQDK…FGVT), 804-891 (PPVH…FTVT), 902-982 (PSSE…FTIT), 986-1075 (PPVR…VTVT), 1078-1165 (PERI…FNVS), 1176-1261 (PEAA…FNVQ), 1266-1442 (PPVK…ARLS), 1536-1621 (PVTI…ARLT), 1625-1694 (REVS…EDTG), and 1702-1798 (PAQS…ADTQ). Cystine bridges form between Cys738-Cys788, Cys829-Cys879, Cys920-Cys970, Cys1011-Cys1061, Cys1103-Cys1153, Cys1195-Cys1245, Cys1289-Cys1430, and Cys1558-Cys1608.

As to quaternary structure, component of the 3M complex, composed of core components CUL7, CCDC8 and OBSL1. Interacts with CCDC8. Interacts with CUL7; the interaction is direct. Interacts with FBXW8. Interacts (via N-terminal Ig-like domain) with TTN/titin (via C-terminal Ig-like domain); the interaction is direct.

Its subcellular location is the cytoplasm. It localises to the perinuclear region. The protein resides in the golgi apparatus. Functionally, core component of the 3M complex, a complex required to regulate microtubule dynamics and genome integrity. It is unclear how the 3M complex regulates microtubules, it could act by controlling the level of a microtubule stabilizer. Acts as a regulator of the Cul7-RING(FBXW8) ubiquitin-protein ligase, playing a critical role in the ubiquitin ligase pathway that regulates Golgi morphogenesis and dendrite patterning in brain. Required to localize CUL7 to the Golgi apparatus in neurons. The protein is Obscurin-like protein 1 (Obsl1) of Mus musculus (Mouse).